The primary structure comprises 321 residues: tRNA U34 carboxymethyltransferase (321 aa).

Residues lysine 90, tryptophan 104, lysine 109, glycine 129, 151–153 (DPT), 180–181 (IE), methionine 195, tyrosine 199, and arginine 314 each bind carboxy-S-adenosyl-L-methionine.

The protein belongs to the class I-like SAM-binding methyltransferase superfamily. CmoB family. As to quaternary structure, homotetramer.

The catalysed reaction is carboxy-S-adenosyl-L-methionine + 5-hydroxyuridine(34) in tRNA = 5-carboxymethoxyuridine(34) in tRNA + S-adenosyl-L-homocysteine + H(+). Its function is as follows. Catalyzes carboxymethyl transfer from carboxy-S-adenosyl-L-methionine (Cx-SAM) to 5-hydroxyuridine (ho5U) to form 5-carboxymethoxyuridine (cmo5U) at position 34 in tRNAs. The polypeptide is tRNA U34 carboxymethyltransferase (Histophilus somni (strain 2336) (Haemophilus somnus)).